Consider the following 896-residue polypeptide: Zinc finger protein 574 (896 aa).

C2H2-type zinc fingers lie at residues 16-38 (YVCS…QNSH), 76-98 (YQCL…QELH), and 126-148 (YECV…RQTH). A Phosphoserine modification is found at serine 164. The segment at 214 to 236 (YKCSECSQLFQLPADFLEHQATH) adopts a C2H2-type 4 zinc-finger fold. Residues 239-301 (APVPESQEPA…RARRNNSGEA (63 aa)) form a disordered region. A compositionally biased stretch (polar residues) spans 247-257 (PALQQEVQASS). Over residues 274-287 (HSYELRNGEAIGRD) the composition is skewed to basic and acidic residues. Serine 298 is modified (phosphoserine). C2H2-type zinc fingers lie at residues 309 to 331 (LFCS…LRSH), 336 to 358 (FKCP…LGDH), 364 to 386 (FLCV…RRAH), and 392 to 413 (HSCP…RRTH). The segment at 434 to 460 (FPEPAPAETGEPEAPEPPVSEETSAGP) is disordered. C2H2-type zinc fingers lie at residues 466 to 489 (YRCL…RFVH), 495 to 517 (HKCS…LRTH), 523 to 545 (FPCP…RLTH), 551 to 573 (YRCG…RLVH), 579 to 601 (YRCQ…RYHH), and 607 to 630 (YKCR…LVVH). The segment at 636-659 (HRCPSCGAAFPSSLRLREHRCAAA) adopts a C2H2-type 15; degenerate zinc-finger fold. The C2H2-type 16 zinc-finger motif lies at 667–689 (FECGTCGKKVGSAARLQAHEAAH). Residues 687 to 733 (AAHAAAGPGEVLAKEPPAPRAPRATRAPVASPAGLGGTATASPAAPA) are disordered. Residues 707 to 732 (APRATRAPVASPAGLGGTATASPAAP) show a composition bias toward low complexity. A Phosphoserine modification is found at serine 717. A Phosphothreonine modification is found at threonine 724. Serine 728 is subject to Phosphoserine. 4 C2H2-type zinc fingers span residues 738–760 (LECS…RRIH), 766–788 (YPCP…RRLH), 794–816 (FACE…RRIH), and 822–844 (YSCP…RKTH). Arginine 832 is modified (asymmetric dimethylarginine).

This sequence belongs to the krueppel C2H2-type zinc-finger protein family.

The protein resides in the nucleus. Functionally, may be involved in transcriptional regulation. In Macaca fascicularis (Crab-eating macaque), this protein is Zinc finger protein 574 (ZNF574).